Here is a 100-residue protein sequence, read N- to C-terminus: MFAIIQTGGKQYRVSEGDVIRVESLQGEAGDKVELKALFVGGEQTVFGEDAGKYTVQAEVVEHGRGKKIYIRKYKSGVQYRRRTGHRQNFTAIKILGIQG.

It belongs to the bacterial ribosomal protein bL21 family. As to quaternary structure, part of the 50S ribosomal subunit. Contacts proteins L15 and L20.

Its function is as follows. Binds directly to 23S rRNA, probably serving to organize its structure. The sequence is that of Large ribosomal subunit protein bL21 from Deinococcus radiodurans (strain ATCC 13939 / DSM 20539 / JCM 16871 / CCUG 27074 / LMG 4051 / NBRC 15346 / NCIMB 9279 / VKM B-1422 / R1).